A 172-amino-acid polypeptide reads, in one-letter code: Protein-export protein SecB (172 aa).

This sequence belongs to the SecB family. In terms of assembly, homotetramer, a dimer of dimers. One homotetramer interacts with 1 SecA dimer.

The protein localises to the cytoplasm. In terms of biological role, one of the proteins required for the normal export of preproteins out of the cell cytoplasm. It is a molecular chaperone that binds to a subset of precursor proteins, maintaining them in a translocation-competent state. It also specifically binds to its receptor SecA. The protein is Protein-export protein SecB of Maricaulis maris (strain MCS10) (Caulobacter maris).